Reading from the N-terminus, the 706-residue chain is MSPTDPLDDEDTFKILVATDIHLGFMEKDAVRGNDTFVTFDEILRLALENEVDFILLGGDLFHENKPSRKTLHSCLELLRKYCMGDRPVQFEVISDQSVNFGFSKFPWVNYQDGNLNISIPVFSIHGNHDDPTGADALCALDVLSCAGFVNHFGRSMSVEKVDISPVLLQKGSTKLALYGLGSIPDERLYRMFVNKKVTMLRPKEDENSWFNLFVIHQNRSKHGNTNFIPEQFLDDFIDLVIWGHEHECKIGPIKNEQQLFYVSQPGSSVVTSLSPGEAVKKHVGLLRIKGRKMNMQKLPLRTVRRFFIEDVVLANHPNLFNPDNPKVTQAIQSFCLEKIEEMLDSAERERLGNPQQPGKPLIRLRVDYSGGFEPFNVLRFSQKFVDRVANPKDVIHFFRHREQKGKTGEEINFGMLITKPASEGATLRVEDLVKQYFQTAEKNVQLSLLTERGMGEAVQEFVDKEEKDAIEELVKYQLEKTQRFLKERHIDALEDKIDEEVRRFRESRQRNTNEEDDEVREAMSRARALRSQSETSTSAFSAEDLSFDTSEQTANDSDDSLSAVPSRGRGRGRGRRGARGQSSAPRGGSQRGRDTGLEITTRGRSSKATSSTSRNMSIIDAFRSTRQQPSRNVAPKNYSETIEVDDSDEDDIFPTNSRADQRWSGTTSSKRMSQSQTAKGVDFESDEDDDDDPFMSSSCPRRNRR.

Residue Ser-2 is modified to N-acetylserine. Ser-2 bears the Phosphoserine mark. Mn(2+)-binding residues include Asp-20, His-22, and Asp-60. Positions 87–117 (RPVQFEVISDQSVNFGFSKFPWVNYQDGNLN) are interaction with NBN. Asn-128 is a binding site for Mn(2+). The Proton donor role is filled by His-129. Residues His-217, His-245, and His-247 each coordinate Mn(2+). Lys-255 is covalently cross-linked (Glycyl lysine isopeptide (Lys-Gly) (interchain with G-Cter in SUMO2)). Ser-275 carries the post-translational modification Phosphoserine. Lys-282 participates in a covalent cross-link: Glycyl lysine isopeptide (Lys-Gly) (interchain with G-Cter in UFM1). Residue Lys-339 forms a Glycyl lysine isopeptide (Lys-Gly) (interchain with G-Cter in ubiquitin) linkage. Glycyl lysine isopeptide (Lys-Gly) (interchain with G-Cter in SUMO) cross-links involve residues Lys-384 and Lys-468. Lys-481 participates in a covalent cross-link: Glycyl lysine isopeptide (Lys-Gly) (interchain with G-Cter in ubiquitin). Positions 505 to 514 (FRESRQRNTN) are enriched in basic and acidic residues. Positions 505–706 (FRESRQRNTN…SSSCPRRNRR (202 aa)) are disordered. Residues 531 to 541 (RSQSETSTSAF) show a composition bias toward polar residues. Positions 569 to 579 (GRGRGRGRRGA) are enriched in basic residues. An asymmetric dimethylarginine mark is found at Arg-570, Arg-572, Arg-574, Arg-576, Arg-577, Arg-580, Arg-587, Arg-592, and Arg-594. The GAR motif lies at 570-594 (RGRGRGRRGARGQSSAPRGGSQRGR). A compositionally biased stretch (low complexity) spans 580–589 (RGQSSAPRGG). The span at 603–617 (RGRSSKATSSTSRNM) shows a compositional bias: polar residues. A phosphoserine mark is found at Ser-618, Ser-640, and Ser-648. A compositionally biased stretch (acidic residues) spans 643-653 (IEVDDSDEDDI). Over residues 655 to 679 (PTNSRADQRWSGTTSSKRMSQSQTA) the composition is skewed to polar residues. The residue at position 671 (Lys-671) is an N6-lactoyllysine. A phosphoserine mark is found at Ser-674, Ser-676, Ser-686, and Ser-699. Residues 684-694 (FESDEDDDDDP) are compositionally biased toward acidic residues.

The protein belongs to the MRE11/RAD32 family. In terms of assembly, component of the MRN complex composed of two heterodimers RAD50 and MRE11 associated with a single NBN. The MRN complexes dimerize on DNA to form joined MRN-MRN oligomers required for DNA double-strand break repair. As part of the MRN complex, interacts with MCM9; the interaction recruits the complex to DNA repair sites. Component of the BASC complex, at least composed of BRCA1, MSH2, MSH6, MLH1, ATM, BLM, RAD50, MRE11 and NBN. Found in a complex with TERF2. Interacts with DCLRE1C/Artemis and DCLRE1B/Apollo. Interacts with ATF2. Interacts with EXD2. Interacts with MRNIP. Interacts with SAMHD1; leading to stimulate 3'-5' exonuclease activity. Interacts (when ubiquitinated) with UBQLN4 (via its UBA domain). Interacts with CYREN (via XLF motif). Interacts with GFI1; promoting methylation by PRMT1. Interacts with DYNLL1; inhibiting the activity of MRE11. Interacts with C1QBP and RAD50; interaction takes place in absence of DNA damage to form the MRC (MRE11-RAD50-C1QBP) complex that inhibits the activity of MRE11. Interacts with AGER/RAGE; AGER is recruited to DNA double-strand break sites where it enhances MRE11 endonuclease activity to promote DNA repair. It depends on Mn(2+) as a cofactor. Post-translationally, phosphorylated by ATM at Ser-674 and Ser-676 in response to DNA damage, promoting MRE11 activity: phosphorylation activates MRE11 by preventing the interaction between MRE11 and the C1QBP inhibitor. Phosphorylation at Ser-648 by PLK1 primes for phosphorylation at Ser-686 by CK2, inhibiting recruitment of the MRN complex to DNA damage sites. Asymmetric dimethylation by PRMT1 promotes MRE11 exonuclease activity. In terms of processing, lactylation at Lys-671 by CREBBP/CBP in response to DNA damage promotes DNA binding and MRE11 activity. Post-translationally, acetylated on lysine residues by KAT2A /GCN5. Ubiquitinated following DNA damage. Ubiquitination triggers interaction with UBQLN4, leading to MRE11 removal from chromatin and degradation by the proteasome. Ubiquitinated at Lys-339 and Lys-481 by RNF126 via 'Lys-27'- and 'Lys-29'-linked polyubiquitin chains, promoting the exonuclease activity of MRE11. In terms of processing, SUMOylated by PIAS1, stabilizing MRE11 on chromatin during end resection. DeSUMOylated by SENP3 following removal from DNA double-strand breaks (DSBs). Post-translationally, ufmylation at Lys-282 promotes MRE11 activity and is required for activation of the ATM and ATR kinases by the MRN complex.

It localises to the nucleus. It is found in the chromosome. The protein localises to the telomere. Its activity is regulated as follows. Interaction with SAMHD1 stimulates the double-strand-specific 3'-5' exonuclease activity. RBBP8/CtIP specifically promotes the endonuclease activity to clear protein-DNA adducts and generate clean double-strand break ends. DYNLL1-binding inhibits the activity of MRE11. MRE11 activity is inhibited by C1QBP: in absence of DNA damage, C1QBP interacts with unphosphorylated MRE11, preventing formation and activity of the MRN complex. Its function is as follows. Core component of the MRN complex, which plays a central role in double-strand break (DSB) repair, DNA recombination, maintenance of telomere integrity and meiosis. The MRN complex is involved in the repair of DNA double-strand breaks (DSBs) via homologous recombination (HR), an error-free mechanism which primarily occurs during S and G2 phases. The complex (1) mediates the end resection of damaged DNA, which generates proper single-stranded DNA, a key initial steps in HR, and is (2) required for the recruitment of other repair factors and efficient activation of ATM and ATR upon DNA damage. Within the MRN complex, MRE11 possesses both single-strand endonuclease activity and double-strand-specific 3'-5' exonuclease activity. After DSBs, MRE11 is loaded onto DSBs sites and cleaves DNA by cooperating with RBBP8/CtIP to initiate end resection. MRE11 first endonucleolytically cleaves the 5' strand at DNA DSB ends to prevent non-homologous end joining (NHEJ) and licence HR. It then generates a single-stranded DNA gap via 3' to 5' exonucleolytic degradation to create entry sites for EXO1- and DNA2-mediated 5' to 3' long-range resection, which is required for single-strand invasion and recombination. RBBP8/CtIP specifically promotes the endonuclease activity of MRE11 to clear protein-DNA adducts and generate clean double-strand break ends. MRE11 endonuclease activity is also enhanced by AGER/RAGE. The MRN complex is also required for DNA damage signaling via activation of the ATM and ATR kinases: the nuclease activity of MRE11 is not required to activate ATM and ATR. The MRN complex is also required for the processing of R-loops. The MRN complex is involved in the activation of the cGAS-STING pathway induced by DNA damage during tumorigenesis: the MRN complex acts by displacing CGAS from nucleosome sequestration, thereby activating it. In telomeres the MRN complex may modulate t-loop formation. In Mus musculus (Mouse), this protein is Double-strand break repair protein MRE11.